We begin with the raw amino-acid sequence, 306 residues long: Embryogenic cell protein 40 (306 aa).

Disordered regions lie at residues M1–G57, A80–G171, and G188–H306. A compositionally biased stretch (polar residues) spans I12 to Q23. Low complexity predominate over residues V32–T44. Composition is skewed to gly residues over residues G85–T119, G127–V151, and G159–G171. Over residues G194 to S204 the composition is skewed to low complexity. 2 stretches are compositionally biased toward basic and acidic residues: residues H205–H218 and K243–T259. The span at T260–A278 shows a compositional bias: low complexity. The segment covering V279 to P298 has biased composition (basic and acidic residues).

The protein belongs to the plant dehydrin family.

The protein is Embryogenic cell protein 40 (ECP40) of Daucus carota (Wild carrot).